Reading from the N-terminus, the 458-residue chain is Protein TESPA1 (458 aa).

Ser-312 carries the phosphoserine modification. The segment covering 328-339 (KIQQDPEHRQAL) has biased composition (basic and acidic residues). 2 disordered regions span residues 328–356 (KIQQ…STSS) and 439–458 (LPTI…LTNL). Polar residues-rich tracts occupy residues 346–356 (PIQNTNPSTSS) and 439–450 (LPTIQQKQNQGQ).

As to quaternary structure, interacts with PLCG1 and GRB2; the association is increased with prolonged stimulation of the TCR and may facilitate the assembly of the LAT signalosome. Interacts with ITPR1 and ITPR3. Interacts with HSPA9. In terms of processing, may be phosphorylated in response to store-operated Ca(+2) entry. Expressed in lymphoid tissues, with highest expression levels detected in thymus and lower levels in spleen and lymph nodes (at protein level). Detected in CD4(+) and CD8(+) T-cells, B-cells and mast cells. Not detected in monocytes/macrophages.

The protein resides in the cytoplasm. It localises to the endoplasmic reticulum membrane. May play a role in the regulation of inositol 1,4,5-trisphosphate receptor-mediated Ca(2+) release and mitochondrial Ca(2+) uptake via the mitochondria-associated endoplasmic reticulum membrane (MAM) compartment. Required for the development and maturation of T-cells, its function being essential for the late stages of thymocyte development. Plays a role in T-cell antigen receptor (TCR)-mediated activation of the ERK and NFAT signaling pathways, possibly by serving as a scaffolding protein that promotes the assembly of the LAT signalosome in thymocytes. This is Protein TESPA1 (Tespa1) from Mus musculus (Mouse).